Reading from the N-terminus, the 35-residue chain is Surfactant protein C (35 aa).

2 S-palmitoyl cysteine lipidation sites follow: C5 and C6.

It is found in the secreted. Its subcellular location is the extracellular space. The protein resides in the surface film. Functionally, pulmonary surfactant associated proteins promote alveolar stability by lowering the surface tension at the air-liquid interface in the peripheral air spaces. The protein is Surfactant protein C (SFTPC) of Sus scrofa (Pig).